The primary structure comprises 327 residues: Tetraspanin-4 (327 aa).

Topologically, residues 1-6 (MRSRSN) are cytoplasmic. A helical transmembrane segment spans residues 7–27 (LIGLINFFTFLLSIPILGGGI). Residues 28-43 (WLSSRANSTDCLRFLQ) are Extracellular-facing. Asn34 carries N-linked (GlcNAc...) asparagine glycosylation. Residues 44-64 (WPLIIIGISIMVISLAGIAGA) traverse the membrane as a helical segment. Residues 65-75 (CYQNKFLMWLY) lie on the Cytoplasmic side of the membrane. The chain crosses the membrane as a helical span at residues 76–96 (LFTMFFVIAALIGFTIFAYVV). Over 97-235 (TDKGSGRFVM…LGSLKKSWRK (139 aa)) the chain is Extracellular. Residue Asn187 is glycosylated (N-linked (GlcNAc...) asparagine). The helical transmembrane segment at 236–256 (VSVINIVVVIILVIFYVIACA) threads the bilayer. The Cytoplasmic segment spans residues 257–287 (AYQNVKRMYNDEPVGEARMTNLILVIFKFKE). The helical transmembrane segment at 288–308 (ILVQFFFGIVFLLLFNGLMVC) threads the bilayer. At 309-327 (CCNDKFAFSVFFFGYVTYA) the chain is on the extracellular side.

It belongs to the tetraspanin (TM4SF) family.

It localises to the membrane. Functionally, may be involved in the regulation of cell differentiation. In Arabidopsis thaliana (Mouse-ear cress), this protein is Tetraspanin-4 (TET4).